Consider the following 67-residue polypeptide: Large ribosomal subunit protein bL35 (67 aa).

The protein belongs to the bacterial ribosomal protein bL35 family.

This chain is Large ribosomal subunit protein bL35, found in Sphingopyxis alaskensis (strain DSM 13593 / LMG 18877 / RB2256) (Sphingomonas alaskensis).